We begin with the raw amino-acid sequence, 417 residues long: Actin-like protein 7B (417 aa).

Residues 1-39 (MATKNNPSPKPMGTAQGDPGEAGTLPAPEAGIRDTGSTQ) are disordered. Ser-8 carries the post-translational modification Phosphoserine.

This sequence belongs to the actin family.

It localises to the cytoplasm. The protein resides in the cytoskeleton. The protein is Actin-like protein 7B (Actl7b) of Rattus norvegicus (Rat).